The following is a 465-amino-acid chain: Eukaryotic translation initiation factor 3 subunit M (465 aa).

Positions 215–383 (EEMSYNHVIL…GEFLVHRATY (169 aa)) constitute a PCI domain. The disordered stretch occupies residues 429–465 (AAAESGREGGARGGAGERRRGGGGHQGPREVDLVGGD). Basic and acidic residues-rich tracts occupy residues 433 to 448 (SGRE…ERRR) and 455 to 465 (GPREVDLVGGD).

The protein belongs to the eIF-3 subunit M family. In terms of assembly, component of the eukaryotic translation initiation factor 3 (eIF-3) complex.

The protein localises to the cytoplasm. Component of the eukaryotic translation initiation factor 3 (eIF-3) complex, which is involved in protein synthesis of a specialized repertoire of mRNAs and, together with other initiation factors, stimulates binding of mRNA and methionyl-tRNAi to the 40S ribosome. The eIF-3 complex specifically targets and initiates translation of a subset of mRNAs involved in cell proliferation. The sequence is that of Eukaryotic translation initiation factor 3 subunit M from Coccidioides immitis (strain RS) (Valley fever fungus).